Here is a 722-residue protein sequence, read N- to C-terminus: uncharacterized protein (722 aa).

Residues S575, D658, and H691 each act as charge relay system in the active site.

This sequence belongs to the peptidase S9B family.

This is an uncharacterized protein from Rickettsia prowazekii (strain Madrid E).